A 127-amino-acid polypeptide reads, in one-letter code: Major sperm protein 49 (127 aa).

The residue at position 2 (A2) is an N-acetylalanine. In terms of domain architecture, MSP spans 9–126 (DIQTQPGTKI…RRKNLPIEYN (118 aa)).

In terms of tissue distribution, sperm.

The protein resides in the cell projection. Its subcellular location is the pseudopodium. It localises to the cytoplasm. The protein localises to the cytoskeleton. In terms of biological role, central component in molecular interactions underlying sperm crawling. Forms an extensive filament system that extends from sperm villipoda, along the leading edge of the pseudopod. This chain is Major sperm protein 49 (msp-49), found in Caenorhabditis elegans.